The following is a 799-amino-acid chain: Homeobox protein engrailed (799 aa).

Disordered regions lie at residues 189–331, 369–444, 554–664, and 678–705; these read LPSR…DATK, GNFL…SLRQ, HPFL…DKAK, and SDRP…RTAF. A compositionally biased stretch (polar residues) spans 210–222; it reads QSPSTSIRSNLVS. Basic and acidic residues-rich tracts occupy residues 228–239 and 246–256; these read SRRDDQETSDSC and RAINDSERYDV. Composition is skewed to polar residues over residues 284–299 and 377–401; these read LNLT…QLFH and HTFQ…SSPD. Residues 416–431 show a composition bias toward low complexity; the sequence is ESLSSPSSSSSSSRSS. Basic and acidic residues-rich tracts occupy residues 608 to 619 and 629 to 648; these read DQKKRSRDESAS and VHLK…EKGN. A DNA-binding region (homeobox) is located at residues 698–757; sequence EKRPRTAFTNDQLQRLKREFDECRYLTETRRKNLADELGLTESQIKIWFQNKRAKIKKSV.

This sequence belongs to the engrailed homeobox family. As to expression, expressed in the dorsal ectoderm of early gastrulae in a band corresponding to the peripheral area of the presumptive shell gland. Also expressed at four points along the posterior ectoderm. In late gastrulae, it is predominantly expressed in the peripheral ectoderm of the shell gland and in spots at the posterior end behind the presumptive foot. Expressed in late trochophore larvae at four points behind the foot, at two locations at the base of the foot and in the peripheral ectoderm of the shell gland.

Its subcellular location is the nucleus. In terms of biological role, may be involved in shell and shell gland formation during development. The protein is Homeobox protein engrailed of Lymnaea stagnalis (Great pond snail).